The primary structure comprises 471 residues: MVTTVQRTFRKEVLHALHKAKEVNHAVLISYSRQIESLDPLSFFNYGAKKYTGNRFFWSDPESELTIVGLGKEAVFQTNQKNSERYREVFEQWERFKKTAFHIYEEEKLQHSAVGPVLFGGFSFDPCEERGSQWDHFSEGDFFVPALMLTMTAEGPFLTVNRWVSGGEDAEAVLEGLKAFAAEFMVPDFKQEDQAVIAAAEELDKDDWLKAIETATSQIKEKQYDKVVLARELLLTFDGPIQIEPVLKTLLDDQQTSYVFAIEQEGKTFVGASPERLIKRDGGTVMSSCLAGSIKRGVNEEDDRRIGLELLNDEKNLLEHDIVVGMIHNAFVSSCSEVEKPDGPVLYKTKSVQHLFTPIVGQLRESASIFDLIEKLHPTPALGGSPQEKAVDVIREIEPMSRGWYAAPIGWIDSQDNGEFAVAIRSGLIEGSTARLFAGCGIVEDSEPISEYEETQIKLKPMISALGGERR.

Catalysis depends on lysine 226, which acts as the Proton acceptor. Glutamate 275 functions as the Proton donor in the catalytic mechanism. Glutamate 319 and glutamate 454 together coordinate Mg(2+).

The protein belongs to the isochorismate synthase family. Mg(2+) serves as cofactor.

It carries out the reaction chorismate = isochorismate. It functions in the pathway quinol/quinone metabolism; 1,4-dihydroxy-2-naphthoate biosynthesis; 1,4-dihydroxy-2-naphthoate from chorismate: step 1/7. The protein operates within quinol/quinone metabolism; menaquinone biosynthesis. Functionally, catalyzes the conversion of chorismate to isochorismate. The sequence is that of Isochorismate synthase MenF from Bacillus subtilis (strain 168).